We begin with the raw amino-acid sequence, 330 residues long: Polyprenal reductase (330 aa).

Topologically, residues 1–16 are cytoplasmic; the sequence is MAGWAGFELSALNPLR. The helical transmembrane segment at 17-37 threads the bilayer; the sequence is TLWLALAAAFLFALLLQLAPA. Residues 38–80 lie on the Lumenal side of the membrane; it reads RLLPSCALFQDLLRYGKTKQSGSRRPAVCRAFDVPKRYFSHFY. Residues 81 to 101 traverse the membrane as a helical segment; the sequence is VISVVWNGSLLWLLSQSLFLG. At 102-132 the chain is on the cytoplasmic side; it reads APFPNWLSALLRTLGATQFQALEMESKASRM. The helical transmembrane segment at 133–153 threads the bilayer; sequence PAAELALSAFLVLVFLWVHSL. Residues 154–169 are Lumenal-facing; it reads RRLFECFYVSVFSNAA. A helical transmembrane segment spans residues 170–190; the sequence is IHVVQYCFGLVYYVLVGLTVL. Residues 191–206 lie on the Cytoplasmic side of the membrane; it reads SQVPMDDKNVYVLGKN. The helical transmembrane segment at 207 to 227 threads the bilayer; that stretch reads LLIQARWFHILGMVMFFWSSA. Topologically, residues 228–277 are lumenal; that stretch reads HQYKCHVILSNLRRNKKGVVIHCQHRIPFGDWFEYVSSANYLAELMIYIS. Residues 278–298 traverse the membrane as a helical segment; it reads MAVTFGLHNLTWWLVVTYVFS. Residues 299-330 lie on the Cytoplasmic side of the membrane; that stretch reads SQALSAFFNHKFYRSTFVSYPKHRKAFLPFLF.

The protein belongs to the steroid 5-alpha reductase family. Polyprenal reductase subfamily.

The protein resides in the endoplasmic reticulum membrane. The catalysed reaction is a di-trans,poly-cis-dolichal + NADP(+) = a di-trans,poly-cis-polyprenal + NADPH + H(+). It carries out the reaction a 3-oxo-5alpha-steroid + NADP(+) = a 3-oxo-Delta(4)-steroid + NADPH + H(+). It catalyses the reaction androst-4-ene-3,17-dione + NADPH + H(+) = 5alpha-androstan-3,17-dione + NADP(+). The enzyme catalyses 17beta-hydroxy-5alpha-androstan-3-one + NADP(+) = testosterone + NADPH + H(+). The protein operates within protein modification; protein glycosylation. Functionally, plays a key role in early steps of protein N-linked glycosylation by being involved in the conversion of polyprenol into dolichol. Acts as a polyprenal reductase that mediates the reduction of polyprenal into dolichal in a NADP-dependent mechanism. Dolichols are required for the synthesis of dolichol-linked monosaccharides and the oligosaccharide precursor used for N-glycosylation. Also able to convert testosterone (T) into 5-alpha-dihydrotestosterone (DHT). The sequence is that of Polyprenal reductase from Mus musculus (Mouse).